The following is a 309-amino-acid chain: Formimidoylglutamase (309 aa).

The Mn(2+) site is built by histidine 128, aspartate 153, histidine 155, aspartate 157, cysteine 240, and aspartate 242.

This sequence belongs to the arginase family. Mn(2+) serves as cofactor.

The enzyme catalyses N-formimidoyl-L-glutamate + H2O = formamide + L-glutamate. It functions in the pathway amino-acid degradation; L-histidine degradation into L-glutamate; L-glutamate from N-formimidoyl-L-glutamate (hydrolase route): step 1/1. In terms of biological role, catalyzes the conversion of N-formimidoyl-L-glutamate to L-glutamate and formamide. This Staphylococcus carnosus (strain TM300) protein is Formimidoylglutamase.